Consider the following 523-residue polypeptide: Asc-type amino acid transporter 1 (523 aa).

The disordered stretch occupies residues 1-28; that stretch reads MAGHTQQPSGRGNPRPAPSPSPVPGTVP. Residues 15-25 are compositionally biased toward pro residues; sequence RPAPSPSPVPG. 9 helical membrane-spanning segments follow: residues 40–60, 72–92, 113–133, 268–288, 310–330, 362–382, 388–408, 424–444, and 448–468; these read IGLLSACTIIIGNIIGSGIFI, VGLALFVWVLGGGVTALGSLC, IFGGLAGFLLLWSAVLIMYPT, AIFISIPLVTFVYTFTNIAYF, LLGYFSWVMPVSVALSTFGGI, CTPIPALLVCCGATAVIMLVG, INYVSFINYLCYGVTILGLLL, LLIPVAYLVFWAFLLVFSFIS, and VCGVGVIIILTGVPIFFLGVF. The interval 499 to 523 is disordered; it reads APEEEENGPCPPSLLPATDKPSKPQ.

It belongs to the amino acid-polyamine-organocation (APC) superfamily. Disulfide-linked heterodimer with the amino acid transport protein SLC3A2/4F2hc. Expressed in brain, heart, kidney, liver, lung, pancreas, placenta, and skeletal muscle.

The protein resides in the cell membrane. It catalyses the reaction L-alanine(in) + glycine(out) = L-alanine(out) + glycine(in). The enzyme catalyses L-serine(out) + L-alanine(in) = L-serine(in) + L-alanine(out). The catalysed reaction is L-threonine(out) + L-alanine(in) = L-threonine(in) + L-alanine(out). It carries out the reaction L-cysteine(out) + L-alanine(in) = L-cysteine(in) + L-alanine(out). It catalyses the reaction 2-aminoisobutanoate(out) + L-alanine(in) = 2-aminoisobutanoate(in) + L-alanine(out). The enzyme catalyses D-serine(out) + L-alanine(in) = D-serine(in) + L-alanine(out). The catalysed reaction is D-alanine(out) + L-alanine(in) = D-alanine(in) + L-alanine(out). It carries out the reaction L-valine(out) + L-alanine(in) = L-valine(in) + L-alanine(out). It catalyses the reaction L-methionine(out) + L-alanine(in) = L-methionine(in) + L-alanine(out). The enzyme catalyses beta-alanine(out) + L-alanine(in) = beta-alanine(in) + L-alanine(out). The catalysed reaction is D-cysteine(out) + L-alanine(in) = D-cysteine(in) + L-alanine(out). It carries out the reaction D-threonine(out) + L-alanine(in) = D-threonine(in) + L-alanine(out). It catalyses the reaction D-isoleucine(out) + D-serine(in) = D-isoleucine(in) + D-serine(out). The enzyme catalyses D-serine(in) = D-serine(out). Functionally, associates with SLC3A2/4F2hc to form a functional heterodimeric complex that translocates small neutral L- and D-amino acids across the plasma membrane. Preferentially mediates exchange transport, but can also operate via facilitated diffusion. Acts as a major transporter for glycine, L- and D-serine in the central nervous system. At the spinal cord and brainstem regulates glycine metabolism and glycinergic inhibitory neurotransmission by providing for glycine de novo synthesis from L-serine and glycine recycling from astrocytes to glycinergic motor neurons. At Schaffer collateral-CA1 synapses mediates D-serine and glycine release that modulates post-synaptic activation of NMDA receptors and excitatory glutamatergic transmission. May regulate D-serine release from mesenchymal progenitors located in developing subcutaneous adipose tissue, favoring white adipocyte over thermogenic beige adipocyte lineage commitment. This Homo sapiens (Human) protein is Asc-type amino acid transporter 1 (SLC7A10).